The chain runs to 351 residues: Alanine racemase (351 aa).

The active-site Proton acceptor; specific for D-alanine is the Lys-35. Lys-35 carries the N6-(pyridoxal phosphate)lysine modification. Arg-127 provides a ligand contact to substrate. Tyr-247 acts as the Proton acceptor; specific for L-alanine in catalysis. A substrate-binding site is contributed by Met-295.

It belongs to the alanine racemase family. Pyridoxal 5'-phosphate serves as cofactor.

The enzyme catalyses L-alanine = D-alanine. It functions in the pathway amino-acid biosynthesis; D-alanine biosynthesis; D-alanine from L-alanine: step 1/1. Catalyzes the interconversion of L-alanine and D-alanine. May also act on other amino acids. The sequence is that of Alanine racemase (alr) from Vesicomyosocius okutanii subsp. Calyptogena okutanii (strain HA).